Reading from the N-terminus, the 103-residue chain is Histone H4 (103 aa).

Residues 1-14 show a composition bias toward gly residues; the sequence is MSGRGKGGKGLGKG. Positions 1–20 are disordered; the sequence is MSGRGKGGKGLGKGGAKRHR. Serine 2 carries the N-acetylserine modification. Serine 2 carries the post-translational modification Phosphoserine. Arginine 4 is subject to Asymmetric dimethylarginine; by PRMT1; alternate. A Citrulline; alternate modification is found at arginine 4. Arginine 4 carries the omega-N-methylarginine; by PRMT1; alternate modification. The residue at position 4 (arginine 4) is a Symmetric dimethylarginine; by PRMT5 and PRMT7; alternate. 4 positions are modified to N6-(2-hydroxyisobutyryl)lysine; alternate: lysine 6, lysine 9, lysine 13, and lysine 17. Residue lysine 6 is modified to N6-acetyl-N6-methyllysine; alternate. Residues lysine 6, lysine 9, lysine 13, and lysine 17 each carry the N6-acetyllysine modification. 4 positions are modified to N6-butyryllysine; alternate: lysine 6, lysine 9, lysine 13, and lysine 17. At lysine 6 the chain carries N6-glutaryllysine; alternate. Lysine 6, lysine 9, lysine 13, and lysine 17 each carry N6-lactoyllysine; alternate. N6-propionyllysine; alternate is present on lysine 9. N6-acetyl-N6-methyllysine; alternate is present on lysine 13. The residue at position 13 (lysine 13) is an N6-glutaryllysine; alternate. Lysine 13 bears the N6-methyllysine; alternate mark. N6-propionyllysine; alternate is present on lysine 17. A DNA-binding region spans residues 17-21; the sequence is KRHRK. Lysine 21 carries the N6-methyllysine; alternate modification. Residue lysine 21 is modified to N6,N6,N6-trimethyllysine; alternate. The residue at position 21 (lysine 21) is an N6,N6-dimethyllysine; alternate. Lysine 21 carries the N6-methylated lysine modification. 2 positions are modified to N6-(2-hydroxyisobutyryl)lysine; alternate: lysine 32 and lysine 45. At lysine 32 the chain carries N6-acetyllysine. An N6-butyryllysine; alternate mark is found at lysine 32 and lysine 45. An N6-glutaryllysine; alternate modification is found at lysine 32. At lysine 32 the chain carries N6-lactoyllysine; alternate. 2 positions are modified to N6-propionyllysine; alternate: lysine 32 and lysine 45. Lysine 32 bears the N6-succinyllysine; alternate mark. A Glycyl lysine isopeptide (Lys-Gly) (interchain with G-Cter in UFM1); alternate cross-link involves residue lysine 32. Phosphoserine; by PAK2 is present on serine 48. A Phosphotyrosine modification is found at tyrosine 52. The residue at position 60 (lysine 60) is an N6-acetyllysine. Residues lysine 60, lysine 78, and lysine 80 each carry the N6-glutaryllysine; alternate modification. Lysine 60 bears the N6-(2-hydroxyisobutyryl)lysine mark. N6-(2-hydroxyisobutyryl)lysine; alternate occurs at positions 78 and 80. N6-butyryllysine; alternate is present on residues lysine 78 and lysine 80. The residue at position 78 (lysine 78) is an N6-lactoyllysine; alternate. Residues lysine 78 and lysine 80 each carry the N6-propionyllysine; alternate modification. Lysine 78 is modified (N6-succinyllysine). Position 80 is an N6-acetyllysine (lysine 80). Tyrosine 89 is modified (phosphotyrosine). Lysine 92 carries the N6-(2-hydroxyisobutyryl)lysine; alternate modification. Residue lysine 92 is modified to N6-butyryllysine; alternate. An N6-glutaryllysine; alternate modification is found at lysine 92. N6-lactoyllysine; alternate is present on lysine 92. Residue lysine 92 is modified to N6-propionyllysine; alternate. N6-succinyllysine; alternate is present on lysine 92. Lysine 92 bears the N6-acetyllysine; alternate mark. Lysine 92 is covalently cross-linked (Glycyl lysine isopeptide (Lys-Gly) (interchain with G-Cter in ubiquitin); alternate).

Belongs to the histone H4 family. As to quaternary structure, the nucleosome is a histone octamer containing two molecules each of H2A, H2B, H3 and H4 assembled in one H3-H4 heterotetramer and two H2A-H2B heterodimers. The octamer wraps approximately 147 bp of DNA. Acetylation at Lys-6 (H4K5ac), Lys-9 (H4K8ac), Lys-13 (H4K12ac) and Lys-17 (H4K16ac) occurs in coding regions of the genome but not in heterochromatin. Post-translationally, citrullination at Arg-4 (H4R3ci) by PADI4 impairs methylation. In terms of processing, monomethylation and asymmetric dimethylation at Arg-4 (H4R3me1 and H4R3me2a, respectively) by PRMT1 favors acetylation at Lys-9 (H4K8ac) and Lys-13 (H4K12ac). Demethylation is performed by JMJD6. Symmetric dimethylation on Arg-4 (H4R3me2s) by the PRDM1/PRMT5 complex may play a crucial role in the germ-cell lineage. Monomethylated, dimethylated or trimethylated at Lys-21 (H4K20me1, H4K20me2, H4K20me3). Monomethylation is performed by KMT5A/SET8. Trimethylation is performed by KMT5B and KMT5C and induces gene silencing. Monomethylated at Lys-13 (H4K12me1) by N6AMT1; H4K12me1 modification is present at the promoters of numerous genes encoding cell cycle regulators. Post-translationally, acetyl-methylated at Lys-6 and Lys-13 (H4K5acme and H4K12acme, respectively), acetyl-methylation is an epigenetic mark of active chromatin associated with increased transcriptional initiation. Acetyl-methylation is formed by acetylation by EP300/p300 of lysine residues that are already monomethylated on the same side chain. H4K5acme and H4K12acme marks specifically bind BRD2. In terms of processing, phosphorylated by pak2 at Ser-48 (H4S47ph). This phosphorylation increases the association of H3.3-H4 with the histone chaperone HIRA, thus promoting nucleosome assembly of H3.3-H4 and inhibiting nucleosome assembly of H3.1-H4. Ubiquitinated by the CUL4-DDB-RBX1 complex in response to ultraviolet irradiation. This may weaken the interaction between histones and DNA and facilitate DNA accessibility to repair proteins. Monoubiquitinated at Lys-92 of histone H4 (H4K91ub1) in response to DNA damage. The exact role of H4K91ub1 in DNA damage response is still unclear but it may function as a licensing signal for additional histone H4 post-translational modifications such as H4 Lys-21 methylation (H4K20me). Post-translationally, sumoylated, which is associated with transcriptional repression. In terms of processing, butyrylation of histones marks active promoters and competes with histone acetylation. Glutarylation at Lys-92 (H4K91glu) destabilizes nucleosomes by promoting dissociation of the H2A-H2B dimers from nucleosomes. Post-translationally, ufmylated; monofmylated by UFL1 at Lys-32 (H4K31Ufm1) in response to DNA damage. In terms of processing, lactylated in macrophages by EP300/P300 by using lactoyl-CoA directly derived from endogenous or exogenous lactate, leading to stimulates gene transcription. Delactylated by SIRT3 at Lys-17 (H4K16la).

The protein resides in the nucleus. Its subcellular location is the chromosome. In terms of biological role, core component of nucleosome. Nucleosomes wrap and compact DNA into chromatin, limiting DNA accessibility to the cellular machineries which require DNA as a template. Histones thereby play a central role in transcription regulation, DNA repair, DNA replication and chromosomal stability. DNA accessibility is regulated via a complex set of post-translational modifications of histones, also called histone code, and nucleosome remodeling. The sequence is that of Histone H4 from Xenopus laevis (African clawed frog).